The sequence spans 400 residues: 3-hydroxykynurenine transaminase (400 aa).

The interval 43-44 is binds to and confers specificity for 3-hydroxykynurenine; shared with dimeric partner; sequence SN. Pyridoxal 5'-phosphate contacts are provided by residues 77–79, Ser-154, and Gln-204; that span reads SAH. Ser-154 lines the substrate pocket. Position 205 is an N6-(pyridoxal phosphate)lysine (Lys-205). The pyridoxal 5'-phosphate site is built by Tyr-256 and Thr-259. Arg-356 contacts substrate.

The protein belongs to the class-V pyridoxal-phosphate-dependent aminotransferase family. Homodimer. May form homotetramer. Requires pyridoxal 5'-phosphate as cofactor.

The protein localises to the peroxisome. It carries out the reaction glyoxylate + L-alanine = glycine + pyruvate. The enzyme catalyses L-kynurenine + glyoxylate = kynurenate + glycine + H2O. It catalyses the reaction 3-hydroxy-L-kynurenine + glyoxylate = xanthurenate + glycine + H2O. The catalysed reaction is 3-hydroxy-L-kynurenine + pyruvate = xanthurenate + L-alanine + H2O. It carries out the reaction L-kynurenine + pyruvate = kynurenate + L-alanine + H2O. The enzyme catalyses 2-oxobutanoate + L-alanine = (2S)-2-aminobutanoate + pyruvate. It catalyses the reaction L-phenylalanine + pyruvate = 3-phenylpyruvate + L-alanine. The catalysed reaction is L-serine + pyruvate = 3-hydroxypyruvate + L-alanine. It carries out the reaction L-cysteine + pyruvate = 2-oxo-3-sulfanylpropanoate + L-alanine. The enzyme catalyses 3-hydroxy-L-kynurenine + oxaloacetate = 4-(2-amino-3-hydroxyphenyl)-2,4-dioxobutanoate + L-aspartate. It catalyses the reaction 3-hydroxy-L-kynurenine + 3-phenylpyruvate = 4-(2-amino-3-hydroxyphenyl)-2,4-dioxobutanoate + L-phenylalanine. The catalysed reaction is L-kynurenine + oxaloacetate = 4-(2-aminophenyl)-2,4-dioxobutanoate + L-aspartate. It carries out the reaction 3-phenylpyruvate + L-kynurenine = 4-(2-aminophenyl)-2,4-dioxobutanoate + L-phenylalanine. It participates in amino-acid degradation; L-kynurenine degradation; kynurenate from L-kynurenine: step 1/2. Functionally, catalyzes the pyridoxal 5'-phosphate-dependent transamination of both 3-hydroxykynurenine and L-kynurenine to xanthurenic acid and kynurenic acid, respectively, preferentially using the alpha-ketoacid pyruvate, glyoxylate or oxaloacetate as the amino group acceptor. The affinity and catalytic efficiency for 3-hydroxykynurenine is higher than for L-kynurenine. Involved in the detoxification of cytotoxic metabolite 3-hydroxykynurenine generated by the hydroxylation of L-kynurenine, an intermediate in the tryptophan catabolism pathway. Also catalyzes, although with a lesser efficiency, the transamination of alanine with glyoxylate as an amino group acceptor. May play a role in the detoxification of glyoxylate, a toxic plant metabolite from the diet. The sequence is that of 3-hydroxykynurenine transaminase from Aedes aegypti (Yellowfever mosquito).